A 331-amino-acid polypeptide reads, in one-letter code: Cathepsin S (331 aa).

The N-terminal stretch at 1–16 (MNWLVWALLLCSSAMA) is a signal peptide. A propeptide spans 17–114 (HVHRDPTLDH…VTYKSDPNQK (98 aa)) (activation peptide). The N-linked (GlcNAc...) asparagine glycan is linked to Asn104. Disulfide bonds link Cys126–Cys224, Cys136–Cys180, Cys170–Cys213, and Cys272–Cys320. Residue Cys139 is part of the active site. Residues His278 and Asn298 contribute to the active site.

Belongs to the peptidase C1 family. As to quaternary structure, monomer.

The protein localises to the lysosome. It is found in the secreted. It localises to the cytoplasmic vesicle. Its subcellular location is the phagosome. It carries out the reaction Similar to cathepsin L, but with much less activity on Z-Phe-Arg-|-NHMec, and more activity on the Z-Val-Val-Arg-|-Xaa compound.. Its function is as follows. Thiol protease. Key protease responsible for the removal of the invariant chain from MHC class II molecules and MHC class II antigen presentation. The bond-specificity of this proteinase is in part similar to the specificities of cathepsin L. This Bos taurus (Bovine) protein is Cathepsin S (CTSS).